The following is a 747-amino-acid chain: Protein tyrosine phosphatase domain-containing protein 1 (747 aa).

The tract at residues 1-36 (MAAGVLPQNEDPYSTLVNSSGHAAHMDENSGRPAPK) is disordered. A compositionally biased stretch (polar residues) spans 11 to 21 (DPYSTLVNSSG). In terms of domain architecture, Tyrosine-protein phosphatase spans 82-253 (YSSWVTDNIL…LAPLRNIFSC (172 aa)). Cysteine 190 (phosphocysteine intermediate) is an active-site residue. Serine 392, serine 394, and serine 543 each carry phosphoserine. Residues 549-570 (SSPKAQFPHGQETQDSTDLSEA) form a disordered region.

The protein belongs to the protein-tyrosine phosphatase family. Non-receptor class PTPDC1 subfamily.

May play roles in cilia formation and/or maintenance. The chain is Protein tyrosine phosphatase domain-containing protein 1 (Ptpdc1) from Mus musculus (Mouse).